The primary structure comprises 201 residues: 3-isopropylmalate dehydratase small subunit (201 aa).

It belongs to the LeuD family. LeuD type 1 subfamily. As to quaternary structure, heterodimer of LeuC and LeuD.

It catalyses the reaction (2R,3S)-3-isopropylmalate = (2S)-2-isopropylmalate. Its pathway is amino-acid biosynthesis; L-leucine biosynthesis; L-leucine from 3-methyl-2-oxobutanoate: step 2/4. Its function is as follows. Catalyzes the isomerization between 2-isopropylmalate and 3-isopropylmalate, via the formation of 2-isopropylmaleate. The sequence is that of 3-isopropylmalate dehydratase small subunit from Shewanella pealeana (strain ATCC 700345 / ANG-SQ1).